The primary structure comprises 100 residues: Nucleoid-associated protein Cagg_3200 (100 aa).

Belongs to the YbaB/EbfC family. In terms of assembly, homodimer.

The protein resides in the cytoplasm. The protein localises to the nucleoid. Functionally, binds to DNA and alters its conformation. May be involved in regulation of gene expression, nucleoid organization and DNA protection. In Chloroflexus aggregans (strain MD-66 / DSM 9485), this protein is Nucleoid-associated protein Cagg_3200.